Consider the following 673-residue polypeptide: DNA ligase (673 aa).

NAD(+) is bound by residues 32–36 (DHVYD), 81–82 (SL), and glutamate 111. The active-site N6-AMP-lysine intermediate is the lysine 113. NAD(+) contacts are provided by arginine 134, glutamate 171, lysine 286, and lysine 310. Cysteine 404, cysteine 407, cysteine 422, and cysteine 428 together coordinate Zn(2+). Residues 595 to 673 (NIIDEYKNKT…NEFWKKDNNF (79 aa)) form the BRCT domain.

The protein belongs to the NAD-dependent DNA ligase family. LigA subfamily. Mg(2+) is required as a cofactor. It depends on Mn(2+) as a cofactor.

It carries out the reaction NAD(+) + (deoxyribonucleotide)n-3'-hydroxyl + 5'-phospho-(deoxyribonucleotide)m = (deoxyribonucleotide)n+m + AMP + beta-nicotinamide D-nucleotide.. Functionally, DNA ligase that catalyzes the formation of phosphodiester linkages between 5'-phosphoryl and 3'-hydroxyl groups in double-stranded DNA using NAD as a coenzyme and as the energy source for the reaction. It is essential for DNA replication and repair of damaged DNA. The sequence is that of DNA ligase from Ureaplasma parvum serovar 3 (strain ATCC 27815 / 27 / NCTC 11736).